The chain runs to 362 residues: HMG box-containing protein C19G7.04 (362 aa).

Residues Lys-135–Ile-299 form the SprT-like domain. Positions Pro-306–Gln-348 form a DNA-binding region, HMG box.

It is found in the nucleus. The protein localises to the cytoplasm. The protein resides in the cytoskeleton. Its subcellular location is the spindle. This chain is HMG box-containing protein C19G7.04, found in Schizosaccharomyces pombe (strain 972 / ATCC 24843) (Fission yeast).